We begin with the raw amino-acid sequence, 212 residues long: Methylthioribulose-1-phosphate dehydratase (212 aa).

The Zn(2+) site is built by histidine 97 and histidine 99.

Belongs to the aldolase class II family. MtnB subfamily. As to quaternary structure, homotetramer. Zn(2+) serves as cofactor.

The enzyme catalyses 5-(methylsulfanyl)-D-ribulose 1-phosphate = 5-methylsulfanyl-2,3-dioxopentyl phosphate + H2O. It participates in amino-acid biosynthesis; L-methionine biosynthesis via salvage pathway; L-methionine from S-methyl-5-thio-alpha-D-ribose 1-phosphate: step 2/6. Its function is as follows. Catalyzes the dehydration of methylthioribulose-1-phosphate (MTRu-1-P) into 2,3-diketo-5-methylthiopentyl-1-phosphate (DK-MTP-1-P). This is Methylthioribulose-1-phosphate dehydratase from Bacillus cytotoxicus (strain DSM 22905 / CIP 110041 / 391-98 / NVH 391-98).